Consider the following 159-residue polypeptide: 3-dehydroquinate dehydratase (159 aa).

The active-site Proton acceptor is tyrosine 22. Substrate is bound by residues asparagine 73, histidine 79, and aspartate 86. Histidine 99 functions as the Proton donor in the catalytic mechanism. Substrate-binding positions include 100-101 (IS) and arginine 110.

Belongs to the type-II 3-dehydroquinase family. In terms of assembly, homododecamer.

It catalyses the reaction 3-dehydroquinate = 3-dehydroshikimate + H2O. Its pathway is metabolic intermediate biosynthesis; chorismate biosynthesis; chorismate from D-erythrose 4-phosphate and phosphoenolpyruvate: step 3/7. Functionally, catalyzes a trans-dehydration via an enolate intermediate. This Campylobacter jejuni subsp. jejuni serotype O:6 (strain 81116 / NCTC 11828) protein is 3-dehydroquinate dehydratase.